Consider the following 480-residue polypeptide: UDP-glucose 6-dehydrogenase 4 (480 aa).

NAD(+)-binding positions include Gly8–Gly13, Asp33, Arg38, Val86–Thr90, Ser127–Thr128, and Glu161. Substrate-binding positions include Glu157–Glu161, Lys216–Leu223, and Arg256–Gly269. The active-site Nucleophile is Cys272. Cys272 to Lys275 lines the NAD(+) pocket. Phe334 to Lys335 contacts substrate. Arg342 serves as a coordination point for NAD(+). Phosphoserine is present on Ser393. A substrate-binding site is contributed by Arg447.

Belongs to the UDP-glucose/GDP-mannose dehydrogenase family.

The catalysed reaction is UDP-alpha-D-glucose + 2 NAD(+) + H2O = UDP-alpha-D-glucuronate + 2 NADH + 3 H(+). The protein operates within nucleotide-sugar biosynthesis; UDP-alpha-D-glucuronate biosynthesis; UDP-alpha-D-glucuronate from UDP-alpha-D-glucose: step 1/1. Involved in the biosynthesis of UDP-glucuronic acid (UDP-GlcA), providing nucleotide sugars for cell-wall polymers. The sequence is that of UDP-glucose 6-dehydrogenase 4 (UGD4) from Oryza sativa subsp. japonica (Rice).